Consider the following 235-residue polypeptide: MGKHRGKKYLEVAKLVEIGKLYDIREALELVQKTKTAKFTETVEVALRLGVDPRHADQQIRGTVVLPHGTGKTVKILAITSGENIEKALAAGADYAGAEEYINQIQQGWLDFDLVIATPDMMPKIGRLGKILGTKGLMPNPKSGTVTPDIAAAVSEFKKGKLAFRVDKLGSIHAPIGKVDFDLDKIEENFKAFMDQIIRLKPASSKGQYLRTVAVSLTMGPGVKMDPAIVGKIVG.

This sequence belongs to the universal ribosomal protein uL1 family. Part of the 50S ribosomal subunit.

In terms of biological role, binds directly to 23S rRNA. The L1 stalk is quite mobile in the ribosome, and is involved in E site tRNA release. Its function is as follows. Protein L1 is also a translational repressor protein, it controls the translation of the L11 operon by binding to its mRNA. The chain is Large ribosomal subunit protein uL1 from Fusobacterium nucleatum subsp. nucleatum (strain ATCC 25586 / DSM 15643 / BCRC 10681 / CIP 101130 / JCM 8532 / KCTC 2640 / LMG 13131 / VPI 4355).